A 283-amino-acid chain; its full sequence is Phosphatidylglycerol--prolipoprotein diacylglyceryl transferase (283 aa).

7 helical membrane-spanning segments follow: residues 21–41, 62–82, 106–126, 136–156, 190–210, 218–238, and 252–272; these read IEVH…FYMA, YFLW…ILIY, FIGI…IASY, LLIY…FGRI, PSQL…VMWA, GLLI…AEFY, and LSMG…ILLY. Arginine 155 provides a ligand contact to a 1,2-diacyl-sn-glycero-3-phospho-(1'-sn-glycerol).

It belongs to the Lgt family.

The protein localises to the cell inner membrane. It carries out the reaction L-cysteinyl-[prolipoprotein] + a 1,2-diacyl-sn-glycero-3-phospho-(1'-sn-glycerol) = an S-1,2-diacyl-sn-glyceryl-L-cysteinyl-[prolipoprotein] + sn-glycerol 1-phosphate + H(+). The protein operates within protein modification; lipoprotein biosynthesis (diacylglyceryl transfer). Functionally, catalyzes the transfer of the diacylglyceryl group from phosphatidylglycerol to the sulfhydryl group of the N-terminal cysteine of a prolipoprotein, the first step in the formation of mature lipoproteins. This is Phosphatidylglycerol--prolipoprotein diacylglyceryl transferase from Helicobacter acinonychis (strain Sheeba).